The chain runs to 438 residues: 3-phosphoshikimate 1-carboxyvinyltransferase (438 aa).

Lys26, Ser27, and Arg31 together coordinate 3-phosphoshikimate. A phosphoenolpyruvate-binding site is contributed by Lys26. Phosphoenolpyruvate contacts are provided by Gly99 and Arg127. Positions 172, 174, 320, and 347 each coordinate 3-phosphoshikimate. Residue Gln174 coordinates phosphoenolpyruvate. The active-site Proton acceptor is the Asp320. Arg351 and Arg392 together coordinate phosphoenolpyruvate.

This sequence belongs to the EPSP synthase family. Monomer.

Its subcellular location is the cytoplasm. The enzyme catalyses 3-phosphoshikimate + phosphoenolpyruvate = 5-O-(1-carboxyvinyl)-3-phosphoshikimate + phosphate. It functions in the pathway metabolic intermediate biosynthesis; chorismate biosynthesis; chorismate from D-erythrose 4-phosphate and phosphoenolpyruvate: step 6/7. Catalyzes the transfer of the enolpyruvyl moiety of phosphoenolpyruvate (PEP) to the 5-hydroxyl of shikimate-3-phosphate (S3P) to produce enolpyruvyl shikimate-3-phosphate and inorganic phosphate. This chain is 3-phosphoshikimate 1-carboxyvinyltransferase, found in Xanthomonas campestris pv. campestris (strain 8004).